Here is a 1567-residue protein sequence, read N- to C-terminus: ABC multidrug transporter MDR1 (1567 aa).

Residues 1-11 (MASQPPQPPSG) are compositionally biased toward pro residues. A disordered region spans residues 1-37 (MASQPPQPPSGQPDTQYEEYQSEVITETTNRPTPAAD). Positions 22–32 (SEVITETTNRP) are enriched in polar residues. N-linked (GlcNAc...) asparagine glycans are attached at residues asparagine 149, asparagine 157, and asparagine 356. Positions 167-432 (VQYQDTFLSP…FEEMGWYCPP (266 aa)) constitute an ABC transporter 1 domain. Transmembrane regions (helical) follow at residues 543 to 563 (STIATNISQIMMALIIGSLFF), 571 to 591 (GFFAKGSVIFFAILLNGLMSI), 636 to 656 (IPIKFLLALVFNIIIYFLGGL), 661 to 681 (AKFFIFFLFTFITILTMSAIF), 691 to 711 (IPQALALAGVMILALVIYTGF), and 798 to 818 (LGILLGFLAFFYFVYLMVSEL). Residues asparagine 819, asparagine 895, and asparagine 912 are each glycosylated (N-linked (GlcNAc...) asparagine). One can recognise an ABC transporter 2 domain in the interval 891 to 1134 (FTWRNVTYDI…LLNYFETHGA (244 aa)). Residue 927–934 (GVSGAGKT) participates in ATP binding. Residues 1172–1202 (ESRHVQQELDRIQSETSKRNEGHGQSAEKEP) form a disordered region. Residues 1231-1251 (IWGKLLLGLASALFIGFSFFL) form a helical membrane-spanning segment. N-linked (GlcNAc...) asparagine glycosylation occurs at asparagine 1253. Helical transmembrane passes span 1257 to 1277 (AGLQNSLFSIFMLTTIFSSLV), 1305 to 1325 (VFLLANIIVEIPYQILLGIIA), 1345 to 1365 (ILLLYCVQFFIFASTFAQMII), 1372 to 1392 (ETAGGIATTMFGLMVTFNGVL), and 1498 to 1518 (GIGWAYIVFNIFATVALYYLI).

This sequence belongs to the ABC transporter superfamily. ABCG family. PDR (TC 3.A.1.205) subfamily.

Its subcellular location is the cell membrane. The enzyme catalyses voriconazole(in) + ATP + H2O = voriconazole(out) + ADP + phosphate + H(+). The catalysed reaction is fluconazole(in) + ATP + H2O = fluconazole(out) + ADP + phosphate + H(+). It carries out the reaction (R)-miconazole(in) + ATP + H2O = (R)-miconazole(out) + ADP + phosphate + H(+). It catalyses the reaction (S)-miconazole(in) + ATP + H2O = (S)-miconazole(out) + ADP + phosphate + H(+). Functionally, pleiotropic ABC efflux transporter that may be involved in the modulation susceptibility to a wide range of unrelated cytotoxic compounds, including ethidium bromide, ketoconazole, cycloheximide, fluconazole, griseofulvin, imazalil and itraconazole. The sequence is that of ABC multidrug transporter MDR1 from Trichophyton interdigitale (strain MR816).